Consider the following 545-residue polypeptide: CTP synthase (545 aa).

The tract at residues 1–266 (MTTNYIFVTG…DDYICKRFSL (266 aa)) is amidoligase domain. Residue S14 participates in CTP binding. S14 provides a ligand contact to UTP. Residues 15 to 20 (SLGKGI) and D72 each bind ATP. Residues D72 and E140 each coordinate Mg(2+). Residues 147-149 (DIE), 187-192 (KTKPTQ), and K223 each bind CTP. UTP contacts are provided by residues 187–192 (KTKPTQ) and K223. Residue 239 to 241 (KDV) participates in ATP binding. One can recognise a Glutamine amidotransferase type-1 domain in the interval 291–542 (TIGMVGKYIE…VKAASEHQKR (252 aa)). Residue G352 coordinates L-glutamine. Catalysis depends on C379, which acts as the Nucleophile; for glutamine hydrolysis. Residues 380 to 383 (LGMQ), E403, and R470 contribute to the L-glutamine site. Residues H515 and E517 contribute to the active site.

Belongs to the CTP synthase family. As to quaternary structure, homotetramer.

It carries out the reaction UTP + L-glutamine + ATP + H2O = CTP + L-glutamate + ADP + phosphate + 2 H(+). It catalyses the reaction L-glutamine + H2O = L-glutamate + NH4(+). The catalysed reaction is UTP + NH4(+) + ATP = CTP + ADP + phosphate + 2 H(+). It functions in the pathway pyrimidine metabolism; CTP biosynthesis via de novo pathway; CTP from UDP: step 2/2. With respect to regulation, allosterically activated by GTP, when glutamine is the substrate; GTP has no effect on the reaction when ammonia is the substrate. The allosteric effector GTP functions by stabilizing the protein conformation that binds the tetrahedral intermediate(s) formed during glutamine hydrolysis. Inhibited by the product CTP, via allosteric rather than competitive inhibition. Its function is as follows. Catalyzes the ATP-dependent amination of UTP to CTP with either L-glutamine or ammonia as the source of nitrogen. Regulates intracellular CTP levels through interactions with the four ribonucleotide triphosphates. In Salmonella schwarzengrund (strain CVM19633), this protein is CTP synthase.